Consider the following 249-residue polypeptide: MNEAAKTLDGWYCLHDFRTINWAELKTLSTEERQQIINEFLDLMEKWNDTEAQGEGSHAVYTIVGQKADVMLMILRPSMEELNEIETAFNKSRFAEFTVPAYSYVSVVELSNYMAGDSDDDPYQNPHVRARLYPQLPKAKHVCFYPMDKRRQGDDNWYMLPMDQRRELMKSHGMIGRSYAGKVKQIITGSVGFDDWEWGVTLFADDVLQFKKLVYEMRFDEVSARYGEFGSFFVGNLLTAEGIPSYFYV.

Residues arginine 131, 145-149 (YPMDK), histidine 172, glutamine 185, and serine 223 contribute to the Fe-coproporphyrin III site. The active site involves tyrosine 145.

It belongs to the ChdC family. Type 1 subfamily. Fe-coproporphyrin III is required as a cofactor.

The catalysed reaction is Fe-coproporphyrin III + 2 H2O2 + 2 H(+) = heme b + 2 CO2 + 4 H2O. The enzyme catalyses Fe-coproporphyrin III + H2O2 + H(+) = harderoheme III + CO2 + 2 H2O. It carries out the reaction harderoheme III + H2O2 + H(+) = heme b + CO2 + 2 H2O. It functions in the pathway porphyrin-containing compound metabolism; protoheme biosynthesis. Involved in coproporphyrin-dependent heme b biosynthesis. Catalyzes the decarboxylation of Fe-coproporphyrin III (coproheme) to heme b (protoheme IX), the last step of the pathway. The reaction occurs in a stepwise manner with a three-propionate intermediate. The protein is Coproheme decarboxylase of Halalkalibacterium halodurans (strain ATCC BAA-125 / DSM 18197 / FERM 7344 / JCM 9153 / C-125) (Bacillus halodurans).